The chain runs to 1073 residues: Carbamoyl phosphate synthase large chain (1073 aa).

Residues 2-403 are carboxyphosphate synthetic domain; the sequence is PKRTDIKSIL…SVQKALRGLE (402 aa). 12 residues coordinate ATP: Arg-129, Arg-169, Gly-175, Gly-176, Glu-208, Leu-210, Glu-215, Gly-241, Val-242, His-243, Gln-285, and Glu-299. In terms of domain architecture, ATP-grasp 1 spans 133-328; the sequence is DKAMKDIGLA…IAKIAAKLAV (196 aa). Residues Gln-285, Glu-299, and Asn-301 each contribute to the Mg(2+) site. Positions 285, 299, and 301 each coordinate Mn(2+). The segment at 404–553 is oligomerization domain; that stretch reads VGATGFDPKL…YSTYEEECEA (150 aa). Residues 554–935 form a carbamoyl phosphate synthetic domain region; the sequence is NPSSREKIMI…AFAKAQLGAS (382 aa). Residues 678-869 enclose the ATP-grasp 2 domain; that stretch reads QQMVQRLNLR…LAKVAARVMA (192 aa). Positions 714, 753, 755, 760, 785, 786, 787, 788, 828, and 840 each coordinate ATP. Mg(2+) contacts are provided by Gln-828, Glu-840, and Asn-842. Positions 828, 840, and 842 each coordinate Mn(2+). An MGS-like domain is found at 936-1073; that stretch reads EILPTAGCAF…LQDLHAGIKA (138 aa). Residues 936 to 1073 are allosteric domain; sequence EILPTAGCAF…LQDLHAGIKA (138 aa).

This sequence belongs to the CarB family. As to quaternary structure, composed of two chains; the small (or glutamine) chain promotes the hydrolysis of glutamine to ammonia, which is used by the large (or ammonia) chain to synthesize carbamoyl phosphate. Tetramer of heterodimers (alpha,beta)4. The cofactor is Mg(2+). It depends on Mn(2+) as a cofactor.

It catalyses the reaction hydrogencarbonate + L-glutamine + 2 ATP + H2O = carbamoyl phosphate + L-glutamate + 2 ADP + phosphate + 2 H(+). The enzyme catalyses hydrogencarbonate + NH4(+) + 2 ATP = carbamoyl phosphate + 2 ADP + phosphate + 2 H(+). It functions in the pathway amino-acid biosynthesis; L-arginine biosynthesis; carbamoyl phosphate from bicarbonate: step 1/1. Its pathway is pyrimidine metabolism; UMP biosynthesis via de novo pathway; (S)-dihydroorotate from bicarbonate: step 1/3. In terms of biological role, large subunit of the glutamine-dependent carbamoyl phosphate synthetase (CPSase). CPSase catalyzes the formation of carbamoyl phosphate from the ammonia moiety of glutamine, carbonate, and phosphate donated by ATP, constituting the first step of 2 biosynthetic pathways, one leading to arginine and/or urea and the other to pyrimidine nucleotides. The large subunit (synthetase) binds the substrates ammonia (free or transferred from glutamine from the small subunit), hydrogencarbonate and ATP and carries out an ATP-coupled ligase reaction, activating hydrogencarbonate by forming carboxy phosphate which reacts with ammonia to form carbamoyl phosphate. In Pseudomonas aeruginosa (strain ATCC 15692 / DSM 22644 / CIP 104116 / JCM 14847 / LMG 12228 / 1C / PRS 101 / PAO1), this protein is Carbamoyl phosphate synthase large chain.